A 216-amino-acid chain; its full sequence is 3-isopropylmalate dehydratase small subunit 1 (216 aa).

It belongs to the LeuD family. LeuD type 1 subfamily. In terms of assembly, heterodimer of LeuC and LeuD.

It catalyses the reaction (2R,3S)-3-isopropylmalate = (2S)-2-isopropylmalate. It participates in amino-acid biosynthesis; L-leucine biosynthesis; L-leucine from 3-methyl-2-oxobutanoate: step 2/4. In terms of biological role, catalyzes the isomerization between 2-isopropylmalate and 3-isopropylmalate, via the formation of 2-isopropylmaleate. This chain is 3-isopropylmalate dehydratase small subunit 1, found in Bordetella bronchiseptica (strain ATCC BAA-588 / NCTC 13252 / RB50) (Alcaligenes bronchisepticus).